Here is a 238-residue protein sequence, read N- to C-terminus: Cysteine-rich venom protein (238 aa).

An N-terminal signal peptide occupies residues 1-19; sequence MIAFIVLLSLAAVLQQSSG. Positions 20–27 are excised as a propeptide; the sequence is TVDFASES. Residues 39–164 form the SCP domain; sequence KKHNALRRSV…PTKYLYVCQY (126 aa). 8 disulfide bridges follow: Cys75-Cys153, Cys92-Cys165, Cys148-Cys162, Cys184-Cys191, Cys187-Cys196, Cys200-Cys233, Cys209-Cys227, and Cys218-Cys231. Residues 200 to 233 enclose the ShKT domain; the sequence is CKREDDYSNCKSLAEKNKCMEEWMKSKCPASCFC.

It belongs to the CRISP family. As to expression, expressed by the venom gland.

The protein resides in the secreted. In terms of biological role, blocks olfactory (CNGA2) and retinal (CNGA1) cyclic nucleotide-gated (CNG) ion channel currents. Does not inhibit retinal (CNGA3) currents. It forms high-affinity contacts with the pore turret region and most likely inhibits CNG channel current by blocking the external entrance to the transmembrane pore. Does not affect neither depolarization- nor caffeine-induced contraction arterial smooth muscle. This chain is Cysteine-rich venom protein, found in Demansia vestigiata (Lesser black whip snake).